Reading from the N-terminus, the 445-residue chain is Putative serpin-Z5 (445 aa).

Residues 356 to 380 (GTEAAASAINMVCGMSMTPEPRPVP) form an RCL region.

Belongs to the serpin family.

Its function is as follows. Probable serine protease inhibitor. This Oryza sativa subsp. japonica (Rice) protein is Putative serpin-Z5.